The chain runs to 352 residues: Ketol-acid reductoisomerase (NAD(+)) (352 aa).

The region spanning 11–199 is the KARI N-terminal Rossmann domain; that stretch reads ENVVTSEEFT…AIGSGYLFPT (189 aa). Residues 38 to 41 and 100 to 103 contribute to the NAD(+) site; these read YGVQ and DAGQ. The active site involves H124. Position 153 (G153) interacts with NAD(+). A KARI C-terminal knotted domain is found at 200 to 347; that stretch reads TFEKEVFSDL…AAVRALRPEN (148 aa). Mg(2+) is bound by residues D208, E212, E244, and E248. S270 lines the substrate pocket.

The protein belongs to the ketol-acid reductoisomerase family. Mg(2+) is required as a cofactor.

It catalyses the reaction (2R)-2,3-dihydroxy-3-methylbutanoate + NAD(+) = (2S)-2-acetolactate + NADH + H(+). Its pathway is amino-acid biosynthesis; L-isoleucine biosynthesis; L-isoleucine from 2-oxobutanoate: step 2/4. The protein operates within amino-acid biosynthesis; L-valine biosynthesis; L-valine from pyruvate: step 2/4. Its function is as follows. Involved in the biosynthesis of branched-chain amino acids (BCAA). Catalyzes an alkyl-migration followed by a ketol-acid reduction of (S)-2-acetolactate (S2AL) to yield (R)-2,3-dihydroxy-isovalerate. In the isomerase reaction, S2AL is rearranged via a Mg-dependent methyl migration to produce 3-hydroxy-3-methyl-2-ketobutyrate (HMKB). In the reductase reaction, this 2-ketoacid undergoes a metal-dependent reduction by NADH to yield (R)-2,3-dihydroxy-isovalerate. The protein is Ketol-acid reductoisomerase (NAD(+)) of Desulfosudis oleivorans (strain DSM 6200 / JCM 39069 / Hxd3) (Desulfococcus oleovorans).